Reading from the N-terminus, the 210-residue chain is Meiotic coiled-coil protein 7 (210 aa).

A coiled-coil region spans residues 77–148 (KRSRESVLGS…LKTQLSNLNH (72 aa)).

This sequence belongs to the MND1 family. In terms of assembly, interacts with meu13.

It is found in the cytoplasm. Its subcellular location is the nucleus. Its function is as follows. Required for meiotic recombination. This Schizosaccharomyces pombe (strain 972 / ATCC 24843) (Fission yeast) protein is Meiotic coiled-coil protein 7 (mcp7).